The sequence spans 118 residues: Large ribosomal subunit protein uL18 (118 aa).

It belongs to the universal ribosomal protein uL18 family. In terms of assembly, part of the 50S ribosomal subunit; part of the 5S rRNA/L5/L18/L25 subcomplex. Contacts the 5S and 23S rRNAs.

Its function is as follows. This is one of the proteins that bind and probably mediate the attachment of the 5S RNA into the large ribosomal subunit, where it forms part of the central protuberance. The polypeptide is Large ribosomal subunit protein uL18 (Ralstonia pickettii (strain 12J)).